The chain runs to 88 residues: Small ribosomal subunit protein bS16 (88 aa).

The protein belongs to the bacterial ribosomal protein bS16 family.

This Mycoplasmopsis pulmonis (strain UAB CTIP) (Mycoplasma pulmonis) protein is Small ribosomal subunit protein bS16.